The primary structure comprises 261 residues: Lytic polysaccharide monooxygenase-like protein X325 (261 aa).

Positions 1-17 (MQLSALALATLLATANA) are cleaved as a signal peptide. Residues histidine 18, histidine 64, and aspartate 133 each contribute to the Cu(2+) site. Disulfide bonds link cysteine 39/cysteine 139 and cysteine 108/cysteine 155. N-linked (GlcNAc...) asparagine glycans are attached at residues asparagine 157 and asparagine 183. Positions 174-210 (LAENTQGSGNSSGHAHGSSGSGSASASKTDSKSSAAS) are disordered. The span at 180–210 (GSGNSSGHAHGSSGSGSASASKTDSKSSAAS) shows a compositional bias: low complexity. A lipid anchor (GPI-anchor amidated asparagine) is attached at asparagine 238. A propeptide spans 239 to 261 (SGSLAYVNGALAIGGVVAAALLI) (removed in mature form).

The protein belongs to the X325 family. It depends on Cu(2+) as a cofactor.

It is found in the cell membrane. In terms of biological role, lytic polysaccharide monooxygenase-like protein that has diverged to biological functions other than polysaccharide degradation since it does not perform oxidative cleavage of polysaccharides. Acts as a cell surface-bound protein that functions in the copper-accumulation pathway. The protein is Lytic polysaccharide monooxygenase-like protein X325 of Yarrowia lipolytica (strain CLIB 122 / E 150) (Yeast).